The sequence spans 454 residues: Carbon catabolite repressor protein 4 homolog 5 (454 aa).

The segment at 1–76 (MSGYERKNTT…SLRRRRRTKE (76 aa)) is disordered. The segment covering 31–41 (VYEKSNRKESI) has biased composition (basic and acidic residues). Residues 61–75 (VRHSKSSLRRRRRTK) are compositionally biased toward basic residues. Glu-153 provides a ligand contact to Mg(2+).

This sequence belongs to the CCR4/nocturin family. As to quaternary structure, component of the CCR4-NOT complex, at least composed of CRR4 and CAF1 proteins. Mg(2+) is required as a cofactor.

The protein resides in the nucleus. Its subcellular location is the cytoplasm. It carries out the reaction Exonucleolytic cleavage of poly(A) to 5'-AMP.. In terms of biological role, acts as a catalytic component of the CCR4-NOT core complex, which in the nucleus seems to be a general transcription factor, and in the cytoplasm the major mRNA deadenylase involved in mRNA turnover. In Arabidopsis thaliana (Mouse-ear cress), this protein is Carbon catabolite repressor protein 4 homolog 5 (CCR4-5).